A 160-amino-acid chain; its full sequence is Large ribosomal subunit protein uL22c (160 aa).

This sequence belongs to the universal ribosomal protein uL22 family. Part of the 50S ribosomal subunit.

The protein localises to the plastid. Its subcellular location is the chloroplast. This protein binds specifically to 23S rRNA. In terms of biological role, the globular domain of the protein is located near the polypeptide exit tunnel on the outside of the subunit, while an extended beta-hairpin is found that lines the wall of the exit tunnel in the center of the 70S ribosome. This is Large ribosomal subunit protein uL22c (rpl22) from Eucalyptus globulus subsp. globulus (Tasmanian blue gum).